Here is a 232-residue protein sequence, read N- to C-terminus: Response regulator MprA (232 aa).

Residues 4–118 enclose the Response regulatory domain; the sequence is RILVVDDDRA…ELLARMRALL (115 aa). At Asp-48 the chain carries 4-aspartylphosphate. A DNA-binding region (ompR/PhoB-type) is located at residues 131–229; that stretch reads SVAMTFSDLS…VRGVGYVLRE (99 aa).

Post-translationally, phosphorylated and dephosphorylated by MprB.

It is found in the cytoplasm. Functionally, member of the two-component regulatory system MprB/MprA which contributes to maintaining a balance among several systems involved in stress resistance and is required for establishment and maintenance of persistent infection in the host. Functions as a transcriptional regulator that recognizes a 19-bp nucleotide motif comprizing two loosely conserved 8-bp direct DNA-binding motif repeats separated by a 3-bp spacer region. This is Response regulator MprA (mprA) from Mycobacterium ulcerans (strain Agy99).